The chain runs to 302 residues: Dihydroorotate dehydrogenase B (NAD(+)), catalytic subunit (302 aa).

FMN contacts are provided by residues Ser23 and 47 to 48; that span reads KS. Residues Lys47, 71–75, and Asn125 contribute to the substrate site; that span reads NAMGL. Asn125 is an FMN binding site. The active-site Nucleophile is the Cys128. Lys163 and Ile189 together coordinate FMN. A substrate-binding site is contributed by 190-191; it reads NT. Residues Gly215, 241–242, and 263–264 each bind FMN; these read GG and GT.

The protein belongs to the dihydroorotate dehydrogenase family. Type 1 subfamily. As to quaternary structure, heterotetramer of 2 PyrK and 2 PyrD type B subunits. Requires FMN as cofactor.

The protein localises to the cytoplasm. The catalysed reaction is (S)-dihydroorotate + NAD(+) = orotate + NADH + H(+). It participates in pyrimidine metabolism; UMP biosynthesis via de novo pathway; orotate from (S)-dihydroorotate (NAD(+) route): step 1/1. Functionally, catalyzes the conversion of dihydroorotate to orotate with NAD(+) as electron acceptor. The chain is Dihydroorotate dehydrogenase B (NAD(+)), catalytic subunit (pyrD) from Thermococcus kodakarensis (strain ATCC BAA-918 / JCM 12380 / KOD1) (Pyrococcus kodakaraensis (strain KOD1)).